Reading from the N-terminus, the 141-residue chain is Arsenate reductase (141 aa).

Residue C12 is the Nucleophile; cysteine thioarsenate intermediate of the active site.

This sequence belongs to the ArsC family.

It catalyses the reaction [glutaredoxin]-dithiol + arsenate + glutathione + H(+) = glutathionyl-S-S-[glutaredoxin] + arsenite + H2O. Involved in resistance to arsenate. Catalyzes the reduction of arsenate [As(V)] to arsenite [As(III)]. This Escherichia coli (strain K12) protein is Arsenate reductase.